A 319-amino-acid polypeptide reads, in one-letter code: Protease HtpX homolog (319 aa).

Helical transmembrane passes span 6-26 and 28-48; these read TAMLLAFMTVLFMAVGYVIGG and GGMMIALVIAAGMNFFSYWNS. His130 is a Zn(2+) binding site. The active site involves Glu131. Zn(2+) is bound at residue His134. 2 helical membrane-spanning segments follow: residues 145–165 and 172–192; these read MTATLAGAISMLGNFAFFFGG and PLGFIGVLIAMIVAPLAAALV. Glu201 is a Zn(2+) binding site. Residues 280-319 are disordered; it reads EMSTGSTAPVRPDNAVRKSRSVPRTGWGRGGSEPPKGPWS.

It belongs to the peptidase M48B family. Requires Zn(2+) as cofactor.

Its subcellular location is the cell inner membrane. The polypeptide is Protease HtpX homolog (Sinorhizobium medicae (strain WSM419) (Ensifer medicae)).